Consider the following 858-residue polypeptide: MVNFTVDQIRAIMDKKANIRNMSVIAHVDHGKSTLTDSLVCKAGIIASARAGETRFTDTRKDEQERCITIKSTAISLFYELSENDLNFIKQSKDGSGFLINLIDSPGHVDFSSEVTAALRVTDGALVVVDCVSGVCVQTETVLRQAIAERIKPVLMMNKMDRALLELQLEPEELYQTFQRIVENVNVIISTYGEGESGPMGNIMIDPVLGTVGFGSGLHGWAFTLKQFAEMYVAKFAAKGEGQLGAAERAKKVEDMMKKLWGDRYFDPANGKFSKSANSPDGKKLPRTFCQLILDPIFKVFDAIMNFRKEETAKLIEKLDIKLDSEDKDKEGKPLLKAVMRRWLPAGDALLQMITIHLPSPVTAQKYRCELLYEGPPDDEAAMGIKSCDPKGPLMMYISKMVPTSDKGRFYAFGRVFSGVVSTGLKVRIMGPNYTPGKKEDLYLKPIQRTILMMGRYVEPIEDVPCGNIVGLVGVDQFLVKTGTITTFEHAHNMRVMKFSVSPVVRVAVEAKNPADLPKLVEGLKRLAKSDPMVQCIIEESGEHIIAGAGELHLEICLKDLEEDHACIPIKKSDPVVSYRETVSEESNVLCLSKSPNKHNRLYMKARPFPDGLAEDIDKGEVSARQELKARARYLAEKYEWDVAEARKIWCFGPDGTGPNILTDITKGVQYLNEIKDSVVAGFQWATKEGALCEENMRGVRFDVHDVTLHADAIHRGGGQIIPTARRCLYASVLTAQPRLMEPIYLVEIQCPEQVVGGIYGVLNRKRGHVFEESQVAGTPMFVVKAYLPVNESFGFTADLRSNTGGQAFPQCVFDHWQILPGDPFDNSSRPSQVVAETRKRKGLKEGIPALDNFLDKL.

The 346-residue stretch at 17-362 (ANIRNMSVIA…MITIHLPSPV (346 aa)) folds into the tr-type G domain. 26-33 (AHVDHGKS) lines the GTP pocket. Residue T54 is modified to Phosphothreonine. The residue at position 57 (T57) is a Phosphothreonine; by EEF2K. T59 carries the post-translational modification Phosphothreonine. K152 carries the post-translational modification N6-succinyllysine. GTP is bound by residues 158–161 (NKMD) and 216–218 (SGL). At K235 the chain carries N6-acetyllysine. K239 carries the post-translational modification N6-acetyllysine; alternate. Residue K239 forms a Glycyl lysine isopeptide (Lys-Gly) (interchain with G-Cter in SUMO1); alternate linkage. A Phosphotyrosine; by CSK modification is found at Y265. K272 bears the N6-acetyllysine; alternate mark. K272 carries the N6-succinyllysine; alternate modification. K275 carries the post-translational modification N6-acetyllysine. A Glycyl lysine isopeptide (Lys-Gly) (interchain with G-Cter in SUMO) cross-link involves residue K322. At S325 the chain carries Phosphoserine. Position 373 is a phosphotyrosine; by CSK (Y373). At T435 the chain carries Phosphothreonine. N6-acetyllysine occurs at positions 439 and 445. S502 carries the post-translational modification Phosphoserine. K525 is modified (N6,N6,N6-trimethyllysine; by EEF2KMT). K529 is covalently cross-linked (Glycyl lysine isopeptide (Lys-Gly) (interchain with G-Cter in SUMO)). N6-succinyllysine is present on K572. Position 595 is a phosphoserine; by CDK2 (S595). K619 bears the N6-acetyllysine mark. Residue H715 is modified to Diphthamide.

It belongs to the TRAFAC class translation factor GTPase superfamily. Classic translation factor GTPase family. EF-G/EF-2 subfamily. In terms of assembly, binds to 80S ribosomes. Actively translating ribosomes show mutually exclusive binding of eIF5a (EIF5A or EIF5A2) and EEF2/eEF2. Interacts with SERBP1; interaction sequesters EEF2/eEF2 at the A-site of the ribosome, thereby blocking the interaction sites of the mRNA-tRNA complex, promoting ribosome stabilization and hibernation. Interacts with HABP4; interaction takes place at the A-site of hibernating ribosomes and promotes ribosome stabilization. Component of the mRNA surveillance SURF complex, at least composed of ERF1, ERF3 (ERF3A or ERF3B), EEF2, UPF1/RENT1, SMG1, SMG8 and SMG9. Interacts with RBPMS2. Post-translationally, diphthamide is 2-[3-carboxyamido-3-(trimethyl-ammonio)propyl]histidine. Phosphorylation by EF-2 kinase completely inactivates EF-2; it requires prior phosphorylation by CDK2 at Ser-595 during mitotic prometaphase. Phosphorylation by CSK promotes SUMOylation, proteolytic cleavage, and nuclear translocation if the C-terminal fragment. In terms of processing, proteolytically processed at two sites following phosphorylation by CSK. Post-translationally, SUMOylated following phosphorylation by CSK, promotes proteolytic cleavage. ISGylated.

It is found in the cytoplasm. The protein resides in the nucleus. The enzyme catalyses GTP + H2O = GDP + phosphate + H(+). Functionally, catalyzes the GTP-dependent ribosomal translocation step during translation elongation. During this step, the ribosome changes from the pre-translocational (PRE) to the post-translocational (POST) state as the newly formed A-site-bound peptidyl-tRNA and P-site-bound deacylated tRNA move to the P and E sites, respectively. Catalyzes the coordinated movement of the two tRNA molecules, the mRNA and conformational changes in the ribosome. The protein is Elongation factor 2 (Eef2) of Rattus norvegicus (Rat).